The following is a 312-amino-acid chain: tRNA pseudouridine synthase B (312 aa).

The active-site Nucleophile is the D47.

The protein belongs to the pseudouridine synthase TruB family. Type 1 subfamily.

It carries out the reaction uridine(55) in tRNA = pseudouridine(55) in tRNA. Functionally, responsible for synthesis of pseudouridine from uracil-55 in the psi GC loop of transfer RNAs. The chain is tRNA pseudouridine synthase B from Vibrio cholerae serotype O1 (strain M66-2).